The sequence spans 299 residues: N-acetylaspartate synthetase (299 aa).

Positions 44-57 (AAPGPAAAPPPAAG) are enriched in pro residues. The disordered stretch occupies residues 44-70 (AAPGPAAAPPPAAGPQPHGGTGGAGPP). Residues 60–70 (PHGGTGGAGPP) show a composition bias toward gly residues. The chain crosses the membrane as a helical span at residues 118 to 138 (YALLAALCFAVTRSLLLTCLV). The N-acetyltransferase domain maps to 143 to 280 (LALRYYYSRK…VLPGMTLSLA (138 aa)).

This sequence belongs to the NAT8 family. As to expression, expressed in brain, kidney, liver and spleen. In brain, present in neurons but not in astrocytes (at protein level). Expressed in brain, thymus and spleen.

The protein localises to the cytoplasm. Its subcellular location is the microsome membrane. The protein resides in the mitochondrion membrane. It localises to the endoplasmic reticulum membrane. The catalysed reaction is L-aspartate + acetyl-CoA = N-acetyl-L-aspartate + CoA + H(+). Its activity is regulated as follows. Aminooxyacetic acid (AOAA) blocks its activity in both cytoplasm and mitochondria. In terms of biological role, catalyzes the synthesis of N-acetylaspartate acid (NAA) from L-aspartate and acetyl-CoA. Promotes dopamine uptake by regulating TNF-alpha expression. Attenuates methamphetamine-induced inhibition of dopamine uptake. In Mus musculus (Mouse), this protein is N-acetylaspartate synthetase (Nat8l).